Here is a 567-residue protein sequence, read N- to C-terminus: Geranylgeranyl transferase type-2 subunit alpha (567 aa).

PFTA repeat units lie at residues 44 to 78 (LDES…QLET), 88 to 122 (LVKA…RLPE), 124 to 158 (NWTR…QAAV), 159 to 193 (PPAE…QLHP), 207 to 241 (VLLK…RADP), and 363 to 397 (VLQS…ALDP). Ser-98 carries the phosphoserine modification. LRR repeat units lie at residues 442-463 (EVRV…EQLL), 464-486 (LVTH…AALR), 487-508 (CLEV…TNLP), 509-530 (RLQE…QPLA), and 534-555 (RLVL…LEQL).

Belongs to the protein prenyltransferase subunit alpha family. As to quaternary structure, heterotrimer composed of RABGGTA, RABGGTB and CHM; within this trimer, RABGGTA and RABGGTB form the catalytic component B, while CHM (component A) mediates peptide substrate binding. The Rab GGTase dimer (RGGT) interacts with CHM (component A) prior to Rab protein binding; the association is stabilized by geranylgeranyl pyrophosphate (GGpp). The CHM:RGGT:Rab complex is destabilized by GGpp. Interacts with non-phosphorylated form of RAB8A; phosphorylation of RAB8A at 'Thr-72' disrupts this interaction.

It catalyses the reaction geranylgeranyl diphosphate + L-cysteinyl-[protein] = S-geranylgeranyl-L-cysteinyl-[protein] + diphosphate. The enzymatic reaction requires the aid of a Rab escort protein (also called component A), such as CHM. Its function is as follows. Catalyzes the transfer of a geranylgeranyl moiety from geranylgeranyl diphosphate to both cysteines of Rab proteins with the C-terminal sequence -XXCC, -XCXC and -CCXX, such as RAB1A, RAB3A, RAB5A and RAB7A. The sequence is that of Geranylgeranyl transferase type-2 subunit alpha (RABGGTA) from Homo sapiens (Human).